A 195-amino-acid chain; its full sequence is GTP cyclohydrolase-2 (195 aa).

A GTP-binding site is contributed by 48–52; it reads RIHSE. Zn(2+) is bound by residues Cys-53, Cys-64, and Cys-66. Residues Gln-69, 90-92, and Thr-112 each bind GTP; that span reads EGR. Catalysis depends on Asp-124, which acts as the Proton acceptor. Arg-126 functions as the Nucleophile in the catalytic mechanism. The GTP site is built by Thr-147 and Lys-152.

Belongs to the GTP cyclohydrolase II family. Zn(2+) serves as cofactor.

It carries out the reaction GTP + 4 H2O = 2,5-diamino-6-hydroxy-4-(5-phosphoribosylamino)-pyrimidine + formate + 2 phosphate + 3 H(+). Its pathway is cofactor biosynthesis; riboflavin biosynthesis; 5-amino-6-(D-ribitylamino)uracil from GTP: step 1/4. Its function is as follows. Catalyzes the conversion of GTP to 2,5-diamino-6-ribosylamino-4(3H)-pyrimidinone 5'-phosphate (DARP), formate and pyrophosphate. The sequence is that of GTP cyclohydrolase-2 from Campylobacter fetus subsp. fetus (strain 82-40).